A 378-amino-acid polypeptide reads, in one-letter code: Isobutylamine N-hydroxylase (378 aa).

In terms of assembly, exists in dimeric or trimeric form depending upon buffer conditions. It can form an isobutylamine N-hydroxylase two component enzyme system formed of a flavin reductase component (VlmR) and a monooxygenase component (VlmH).

The enzyme catalyses 2-methylpropan-1-amine + FADH2 + O2 = N-(2-methylpropyl)hydroxylamine + FAD + H2O + 2 H(+). It catalyses the reaction 2-methylpropan-1-amine + FMNH2 + O2 = N-(2-methylpropyl)hydroxylamine + FMN + H2O + 2 H(+). Inhibited by 5',5'-dithio-bis(2-nitrobenzoic acid) (DTNB) and 4-(hydroxymercuri)benzoic acid (p-HMB). Functionally, involved in the biosynthesis of the azoxy antibiotic valanimycin, which has an antitumor activity. Catalyzes the oxidation of isobutylamine to isobutylhydroxylamine via the formation of a flavin 4a-hydroperoxide. Unlike other known N-hydroxylases, isobutylamine N-hydroxylase cannot carry out the reduction of the flavin cofactor and requires the NADPH-flavin oxidoreductase VlmR. Also able to oxidize propan-1-amine, butan-1-amine, butan-2-amine and benzylamine. It has a similar activity with either FMNH(2) or FADH(2). The protein is Isobutylamine N-hydroxylase of Streptomyces viridifaciens.